The primary structure comprises 253 residues: POU Class 2 homeobox-associating factor 3 (253 aa).

Positions 5 to 27 constitute an OCA domain; it reads PKVYQGVRVKMTVKELLQQRRAH.

Belongs to the POU2AF family. As to quaternary structure, interacts with POU2F3 in a DNA-dependent manner; this interaction increases POU2F3 transactivation activity. Expressed in tuft cells.

It localises to the cytoplasm. The protein localises to the nucleus. Functionally, transcriptional coactivator that specifically associates with POU2F3. This complex drives the development of tuft cells, a rare a rare chemosensory cells that coordinate immune and neural functions within mucosal epithelial tissues. The chain is POU Class 2 homeobox-associating factor 3 from Mus musculus (Mouse).